The primary structure comprises 502 residues: Cytochrome P450 71A8 (502 aa).

A helical transmembrane segment spans residues 16 to 36 (IISHTLAFQALVSLILLISIT). The disordered stretch occupies residues 93–119 (PVSSRRRPRGNHENSRSRLRRPRGSRS). Residue cysteine 447 participates in heme binding.

Belongs to the cytochrome P450 family. Requires heme as cofactor.

The protein localises to the membrane. The chain is Cytochrome P450 71A8 (CYP71A8) from Mentha piperita (Peppermint).